Reading from the N-terminus, the 125-residue chain is Ribosome-binding factor A (125 aa).

The protein belongs to the RbfA family. Monomer. Binds 30S ribosomal subunits, but not 50S ribosomal subunits or 70S ribosomes.

It is found in the cytoplasm. Functionally, one of several proteins that assist in the late maturation steps of the functional core of the 30S ribosomal subunit. Associates with free 30S ribosomal subunits (but not with 30S subunits that are part of 70S ribosomes or polysomes). Required for efficient processing of 16S rRNA. May interact with the 5'-terminal helix region of 16S rRNA. This chain is Ribosome-binding factor A, found in Acidovorax sp. (strain JS42).